The following is a 192-amino-acid chain: Ion-translocating oxidoreductase complex subunit B (192 aa).

The tract at residues 1-26 (MSTIWIAIAALSALALAFGLVLGYAS) is hydrophobic. The region spanning 32–91 (ENDPIVEEVEAMLPQSQCGQCGYPGCRPYAEAVALNGENINKCGPGGEAMMLKLAEKLNV) is the 4Fe-4S domain. [4Fe-4S] cluster is bound by residues C49, C52, C57, C74, C117, C120, C123, C127, C147, C150, C153, and C157. 2 4Fe-4S ferredoxin-type domains span residues 108-137 (QVAW…GSTK) and 138-167 (AVHT…LRPI).

It belongs to the 4Fe4S bacterial-type ferredoxin family. RnfB subfamily. As to quaternary structure, the complex is composed of six subunits: RnfA, RnfB, RnfC, RnfD, RnfE and RnfG. The cofactor is [4Fe-4S] cluster.

It is found in the cell inner membrane. In terms of biological role, part of a membrane-bound complex that couples electron transfer with translocation of ions across the membrane. This chain is Ion-translocating oxidoreductase complex subunit B, found in Pectobacterium carotovorum subsp. carotovorum (strain PC1).